The chain runs to 269 residues: Hydroxyethylthiazole kinase (269 aa).

M43 is a binding site for substrate. ATP-binding residues include R119 and S165. A192 is a binding site for substrate.

The protein belongs to the Thz kinase family. It depends on Mg(2+) as a cofactor.

The catalysed reaction is 5-(2-hydroxyethyl)-4-methylthiazole + ATP = 4-methyl-5-(2-phosphooxyethyl)-thiazole + ADP + H(+). The protein operates within cofactor biosynthesis; thiamine diphosphate biosynthesis; 4-methyl-5-(2-phosphoethyl)-thiazole from 5-(2-hydroxyethyl)-4-methylthiazole: step 1/1. In terms of biological role, catalyzes the phosphorylation of the hydroxyl group of 4-methyl-5-beta-hydroxyethylthiazole (THZ). This chain is Hydroxyethylthiazole kinase, found in Glaesserella parasuis serovar 5 (strain SH0165) (Haemophilus parasuis).